Reading from the N-terminus, the 225-residue chain is Ribonuclease HII (225 aa).

One can recognise an RNase H type-2 domain in the interval 2-210; sequence GIVVGVDEAG…VRKLGGPWRS (209 aa). 3 residues coordinate a divalent metal cation: aspartate 8, glutamate 9, and aspartate 107.

It belongs to the RNase HII family. Requires Mn(2+) as cofactor. Mg(2+) is required as a cofactor.

The protein resides in the cytoplasm. The catalysed reaction is Endonucleolytic cleavage to 5'-phosphomonoester.. Functionally, endonuclease that specifically degrades the RNA of RNA-DNA hybrids. The sequence is that of Ribonuclease HII (rnhB) from Aeropyrum pernix (strain ATCC 700893 / DSM 11879 / JCM 9820 / NBRC 100138 / K1).